An 845-amino-acid polypeptide reads, in one-letter code: Matrin-3 (845 aa).

Ser-2 carries the N-acetylserine modification. At Lys-3 the chain carries N6-acetyllysine; alternate. Lys-3 is covalently cross-linked (Glycyl lysine isopeptide (Lys-Gly) (interchain with G-Cter in SUMO2); alternate). Phosphoserine occurs at positions 4, 9, 14, 22, 41, 118, and 126. Glycyl lysine isopeptide (Lys-Gly) (interchain with G-Cter in SUMO2) cross-links involve residues Lys-132 and Lys-146. Disordered regions lie at residues 147–174 and 187–213; these read RRRTEEGPTLSYGRDGRSATREPPYRVP and DSFDDRGPSLNPVLDYDHGSRSQESGY. Phosphothreonine is present on Thr-150. Ser-157 is modified (phosphoserine). Tyr-158 carries the phosphotyrosine modification. Residues 160-174 are compositionally biased toward basic and acidic residues; sequence RDGRSATREPPYRVP. Ser-164, Ser-188, and Ser-195 each carry phosphoserine. The span at 201 to 213 shows a compositional bias: basic and acidic residues; it reads DYDHGSRSQESGY. Residue Tyr-202 is modified to Phosphotyrosine. Phosphoserine is present on residues Ser-206, Ser-208, and Ser-211. Tyr-219 carries the phosphotyrosine modification. Residue Ser-234 is modified to Phosphoserine. Residue Lys-245 forms a Glycyl lysine isopeptide (Lys-Gly) (interchain with G-Cter in SUMO2) linkage. Ser-264 bears the Phosphoserine mark. A Glycyl lysine isopeptide (Lys-Gly) (interchain with G-Cter in SUMO2) cross-link involves residue Lys-269. Ser-275 carries the phosphoserine modification. Positions 342 to 394 are disordered; that stretch reads PFMLQQSTNPAPGILGPPPPSFHLGGPAVGPRGNLGAGNGNLQGPRHMQKGRV. Positions 398 to 473 constitute an RRM 1 domain; sequence RVVHIMDFQR…KPVRVHLSQK (76 aa). Glycyl lysine isopeptide (Lys-Gly) (interchain with G-Cter in SUMO2) cross-links involve residues Lys-478, Lys-487, and Lys-491. In terms of domain architecture, RRM 2 spans 496-571; the sequence is RVIHLSNLPH…RCVKVDLSEK (76 aa). Phosphoserine is present on residues Ser-509 and Ser-511. Residue Lys-515 forms a Glycyl lysine isopeptide (Lys-Gly) (interchain with G-Cter in SUMO2) linkage. Lys-522 bears the N6-acetyllysine; alternate mark. Lys-522 is covalently cross-linked (Glycyl lysine isopeptide (Lys-Gly) (interchain with G-Cter in SUMO2); alternate). A Phosphoserine modification is found at Ser-533. Glycyl lysine isopeptide (Lys-Gly) (interchain with G-Cter in SUMO2) cross-links involve residues Lys-554 and Lys-555. Lys-571 is modified (N6-acetyllysine). Positions 588–785 are disordered; it reads KKDKSRKRSY…EYRIGPYQPN (198 aa). Ser-596, Ser-598, Ser-604, and Ser-606 each carry phosphoserine. Over residues 600 to 643 the composition is skewed to basic and acidic residues; that stretch reads DGKESPSDKKSKTDGAQKTENPAEGKEQEEKSGEDGEKDTKDDQ. Residues Lys-617 and Lys-630 each participate in a glycyl lysine isopeptide (Lys-Gly) (interchain with G-Cter in SUMO2) cross-link. Positions 653–665 are enriched in acidic residues; that stretch reads ESEDELLVDEEEA. Phosphoserine is present on residues Ser-654, Ser-671, Ser-673, and Ser-674. A Phosphothreonine modification is found at Thr-679. A Phosphoserine modification is found at Ser-689. Positions 689-704 are enriched in basic and acidic residues; that stretch reads SDGKKEPSDKAVKKDA. Positions 708-716 match the Nuclear localization signal motif; that stretch reads SKKKLKKVD. Residues Lys-717 and Lys-734 each participate in a glycyl lysine isopeptide (Lys-Gly) (interchain with G-Cter in SUMO2) cross-link. Residue Thr-739 is modified to Phosphothreonine. Phosphoserine occurs at positions 745, 757, and 760. Basic and acidic residues predominate over residues 765–778; the sequence is DENKEDYTIPDEYR. Lys-768 participates in a covalent cross-link: Glycyl lysine isopeptide (Lys-Gly) (interchain with G-Cter in SUMO2). A Matrin-type zinc finger spans residues 799–830; the sequence is FYCKLCSLFYTNEEVAKNTHCSSLPHYQKLKK. N6-acetyllysine; alternate is present on Lys-834. Residue Lys-834 forms a Glycyl lysine isopeptide (Lys-Gly) (interchain with G-Cter in SUMO2); alternate linkage.

As to quaternary structure, part of a complex consisting of SFPQ, NONO and MATR3. Interacts with AGO1 and AGO2. Part of a complex composed at least of ASH2L, EMSY, HCFC1, HSPA8, CCAR2, MATR3, MKI67, RBBP5, TUBB2A, WDR5 and ZNF335; this complex may have a histone H3-specific methyltransferase activity. Interacts with TARDBP. Part of the HDP-RNP complex composed of at least HEXIM1, PRKDC, XRCC5, XRCC6, paraspeckle proteins (SFPQ, NONO, PSPC1, RBM14, and MATR3) and NEAT1 RNA. Interacts with FUS. Interacts with IGF2BP1. Interacts with IGF2BP2 and IGF2BP3. Interacts with RBPMS.

It is found in the nucleus matrix. May play a role in transcription or may interact with other nuclear matrix proteins to form the internal fibrogranular network. In association with the SFPQ-NONO heteromer may play a role in nuclear retention of defective RNAs. Plays a role in the regulation of DNA virus-mediated innate immune response by assembling into the HDP-RNP complex, a complex that serves as a platform for IRF3 phosphorylation and subsequent innate immune response activation through the cGAS-STING pathway. Binds to N6-methyladenosine (m6A)-containing mRNAs and contributes to MYC stability by binding to m6A-containing MYC mRNAs. May bind to specific miRNA hairpins. The protein is Matrin-3 (Matr3) of Rattus norvegicus (Rat).